A 481-amino-acid polypeptide reads, in one-letter code: 3-isopropylmalate dehydratase large subunit (481 aa).

3 residues coordinate [4Fe-4S] cluster: C363, C423, and C426. The segment at 434 to 465 is disordered; the sequence is LRPGQRAASTSNRNFEGRQGRGGRTHLVSPPV.

Belongs to the aconitase/IPM isomerase family. LeuC type 1 subfamily. As to quaternary structure, heterodimer of LeuC and LeuD. Requires [4Fe-4S] cluster as cofactor.

It catalyses the reaction (2R,3S)-3-isopropylmalate = (2S)-2-isopropylmalate. Its pathway is amino-acid biosynthesis; L-leucine biosynthesis; L-leucine from 3-methyl-2-oxobutanoate: step 2/4. Functionally, catalyzes the isomerization between 2-isopropylmalate and 3-isopropylmalate, via the formation of 2-isopropylmaleate. The polypeptide is 3-isopropylmalate dehydratase large subunit (Salinispora tropica (strain ATCC BAA-916 / DSM 44818 / JCM 13857 / NBRC 105044 / CNB-440)).